A 364-amino-acid chain; its full sequence is Spermidine/putrescine import ATP-binding protein PotA (364 aa).

The region spanning leucine 5 to isoleucine 235 is the ABC transporter domain. Glycine 37–threonine 44 serves as a coordination point for ATP.

This sequence belongs to the ABC transporter superfamily. Spermidine/putrescine importer (TC 3.A.1.11.1) family. The complex is composed of two ATP-binding proteins (PotA), two transmembrane proteins (PotB and PotC) and a solute-binding protein (PotD).

The protein resides in the cell membrane. It catalyses the reaction ATP + H2O + polyamine-[polyamine-binding protein]Side 1 = ADP + phosphate + polyamineSide 2 + [polyamine-binding protein]Side 1.. Part of the ABC transporter complex PotABCD involved in spermidine/putrescine import. Responsible for energy coupling to the transport system. The polypeptide is Spermidine/putrescine import ATP-binding protein PotA (Staphylococcus aureus (strain USA300)).